A 411-amino-acid polypeptide reads, in one-letter code: S-inosyl-L-homocysteine hydrolase (411 aa).

Asp-121 and Glu-146 together coordinate substrate. An NAD(+)-binding site is contributed by 147–149; sequence TTT. Residues Lys-176 and Asp-180 each contribute to the substrate site. NAD(+) is bound by residues Asn-181, 210-215, Glu-233, Asn-268, 289-291, and Asn-335; these read GYGWCG and SGH.

This sequence belongs to the adenosylhomocysteinase family. NAD(+) is required as a cofactor.

The protein resides in the cytoplasm. The catalysed reaction is S-inosyl-L-homocysteine + H2O = L-homocysteine + inosine. Its pathway is amino-acid biosynthesis; S-adenosyl-L-methionine biosynthesis. Functionally, catalyzes the hydrolysis of S-inosyl-L-homocysteine (SIH) to L-homocysteine (Hcy) and inosine. Likely functions in a S-adenosyl-L-methionine (SAM) recycling pathway from S-adenosyl-L-homocysteine (SAH) produced from SAM-dependent methylation reactions. Can also catalyze the reverse reaction in vitro, i.e. the synthesis of SIH from Hcy and inosine. This chain is S-inosyl-L-homocysteine hydrolase, found in Methanosarcina mazei (strain ATCC BAA-159 / DSM 3647 / Goe1 / Go1 / JCM 11833 / OCM 88) (Methanosarcina frisia).